A 258-amino-acid chain; its full sequence is UPF0246 protein YaaA (258 aa).

Belongs to the UPF0246 family.

The protein is UPF0246 protein YaaA of Escherichia coli O7:K1 (strain IAI39 / ExPEC).